A 114-amino-acid chain; its full sequence is Putative pterin-4-alpha-carbinolamine dehydratase (114 aa).

It belongs to the pterin-4-alpha-carbinolamine dehydratase family.

It catalyses the reaction (4aS,6R)-4a-hydroxy-L-erythro-5,6,7,8-tetrahydrobiopterin = (6R)-L-erythro-6,7-dihydrobiopterin + H2O. The chain is Putative pterin-4-alpha-carbinolamine dehydratase from Methylococcus capsulatus (strain ATCC 33009 / NCIMB 11132 / Bath).